The primary structure comprises 260 residues: Alpha-acetolactate decarboxylase (260 aa).

Belongs to the alpha-acetolactate decarboxylase family.

It catalyses the reaction (2S)-2-acetolactate + H(+) = (R)-acetoin + CO2. The protein operates within polyol metabolism; (R,R)-butane-2,3-diol biosynthesis; (R,R)-butane-2,3-diol from pyruvate: step 2/3. In terms of biological role, converts acetolactate into acetoin, which can be excreted by the cells. This may be a mechanism for controlling the internal pH of cells in the stationary stage. The sequence is that of Alpha-acetolactate decarboxylase (budA) from Klebsiella aerogenes (Enterobacter aerogenes).